The chain runs to 323 residues: MRTATLYRFRLPMEAGVILRYQRLKTRDGFLVHLQENGQQGWGEIAPLPEFSKETVEQAGEAAVAWLRLWHLGAEPDESELPSVAFGISCALAELQGNLPEEADYRKAPLCNGDPDELIVRLNNMSGQKVAKVKIGLYEAVRDGMVVNVLLEAVPDLSLRLDANRSWSRAKADSFAKYVNPDYRNRIAFLEEPCQTSQQSLAFARDTGIAIAWDESVRDEGFNVEAQAGVTAIVIKPTLTGSLARCCQLISAAHNVGLEAVISSSIETSFGLTQLARIAHWLTPATIPGLDTLELIQSQLVRRWPGSTMPVTRLDELAIAWRS.

Catalysis depends on Lys-134, which acts as the Proton donor. Mg(2+)-binding residues include Asp-162, Glu-191, and Asp-214. The active-site Proton acceptor is Lys-236.

Belongs to the mandelate racemase/muconate lactonizing enzyme family. MenC type 1 subfamily. Requires a divalent metal cation as cofactor.

It catalyses the reaction (1R,6R)-6-hydroxy-2-succinyl-cyclohexa-2,4-diene-1-carboxylate = 2-succinylbenzoate + H2O. It functions in the pathway quinol/quinone metabolism; 1,4-dihydroxy-2-naphthoate biosynthesis; 1,4-dihydroxy-2-naphthoate from chorismate: step 4/7. Its pathway is quinol/quinone metabolism; menaquinone biosynthesis. Functionally, converts 2-succinyl-6-hydroxy-2,4-cyclohexadiene-1-carboxylate (SHCHC) to 2-succinylbenzoate (OSB). The chain is o-succinylbenzoate synthase from Photorhabdus laumondii subsp. laumondii (strain DSM 15139 / CIP 105565 / TT01) (Photorhabdus luminescens subsp. laumondii).